A 303-amino-acid chain; its full sequence is Beta-carotene 3-hydroxylase 2, chloroplastic (303 aa).

A chloroplast-targeting transit peptide spans 1–52 (MAAGLSTIAVTLKPLNRSSFSANHPISTAVFPPSLRFNGFRRRKILTVCFVV). 2 helical membrane passes run 96–116 (YLIAAVMSSFGITSMAIMAVY) and 130–150 (VLEMFGTFALSVGAAVGMEFW). In terms of domain architecture, Fatty acid hydroxylase spans 143 to 270 (AAVGMEFWAR…KFKGVPYGLF (128 aa)). The Histidine box-1 signature appears at 155–160 (HRALWH). The Histidine box-2 signature appears at 165 to 171 (NMHESHH). A run of 2 helical transmembrane segments spans residues 180 to 200 (LNDVFAITNAVPAIGLLYYGF) and 206 to 226 (VPGLCFGAGLGITMFGMAYMF). Residues 228 to 233 (HDGLVH) carry the Histidine box-3 motif. Positions 254–258 (HQLHH) match the Histidine box-4 motif.

This sequence belongs to the sterol desaturase family. As to quaternary structure, homodimer. As to expression, expressed in leaves, flowers, stems, roots and siliques.

Its subcellular location is the plastid. The protein resides in the chloroplast membrane. The enzyme catalyses all-trans-beta-carotene + 4 reduced [2Fe-2S]-[ferredoxin] + 2 O2 + 4 H(+) = all-trans-zeaxanthin + 4 oxidized [2Fe-2S]-[ferredoxin] + 2 H2O. Functionally, nonheme diiron monooxygenase involved in the biosynthesis of xanthophylls. Specific for beta-ring hydroxylations of beta-carotene. Also has a low activity toward the beta- and epsilon-rings of alpha-carotene. No activity with acyclic carotenoids such as lycopene and neurosporene. Uses ferredoxin as an electron donor. This chain is Beta-carotene 3-hydroxylase 2, chloroplastic (BETA-OHASE 2), found in Arabidopsis thaliana (Mouse-ear cress).